Reading from the N-terminus, the 410-residue chain is Phosphopentomutase (410 aa).

Mn(2+) is bound by residues Asp10, Asp309, His314, Asp350, His351, and His362.

Belongs to the phosphopentomutase family. Mn(2+) is required as a cofactor.

It is found in the cytoplasm. It carries out the reaction 2-deoxy-alpha-D-ribose 1-phosphate = 2-deoxy-D-ribose 5-phosphate. The enzyme catalyses alpha-D-ribose 1-phosphate = D-ribose 5-phosphate. Its pathway is carbohydrate degradation; 2-deoxy-D-ribose 1-phosphate degradation; D-glyceraldehyde 3-phosphate and acetaldehyde from 2-deoxy-alpha-D-ribose 1-phosphate: step 1/2. Functionally, isomerase that catalyzes the conversion of deoxy-ribose 1-phosphate (dRib-1-P) and ribose 1-phosphate (Rib-1-P) to deoxy-ribose 5-phosphate (dRib-5-P) and ribose 5-phosphate (Rib-5-P), respectively. In Aliivibrio fischeri (strain ATCC 700601 / ES114) (Vibrio fischeri), this protein is Phosphopentomutase.